A 368-amino-acid chain; its full sequence is Glutamyl-tRNA reductase (368 aa).

Residues Thr-43–Arg-46, Ser-89, Glu-94–Gln-96, and Gln-100 contribute to the substrate site. Residue Cys-44 is the Nucleophile of the active site. Residue Gly-164–Gly-169 participates in NADP(+) binding.

This sequence belongs to the glutamyl-tRNA reductase family. In terms of assembly, homodimer.

It catalyses the reaction (S)-4-amino-5-oxopentanoate + tRNA(Glu) + NADP(+) = L-glutamyl-tRNA(Glu) + NADPH + H(+). It functions in the pathway porphyrin-containing compound metabolism; protoporphyrin-IX biosynthesis; 5-aminolevulinate from L-glutamyl-tRNA(Glu): step 1/2. In terms of biological role, catalyzes the NADPH-dependent reduction of glutamyl-tRNA(Glu) to glutamate 1-semialdehyde (GSA). This is Glutamyl-tRNA reductase from Thermosipho melanesiensis (strain DSM 12029 / CIP 104789 / BI429).